The primary structure comprises 110 residues: MSDAAVDTSSEITTKDLKEKKEVVEEAENGRDVPANGNANEENGEQEADNEVDEEEEEGGEEEEEEEEGDGEEEDGDEDEEAESATGKRAAEDDEDDDVDTKKQKTDEDD.

An N-acetylmethionine modification is found at M1. A disordered region spans residues 1-110; that stretch reads MSDAAVDTSS…TKKQKTDEDD (110 aa). The residue at position 2 (S2) is an N-acetylserine; in Prothymosin alpha, N-terminally processed. At S2 the chain carries Phosphoserine. A Phosphothreonine modification is found at T8. Residues S9 and S10 each carry the phosphoserine modification. T13 and T14 each carry phosphothreonine. The span at 13 to 31 shows a compositional bias: basic and acidic residues; sequence TTKDLKEKKEVVEEAENGR. Position 15 is an N6-acetyllysine; alternate (K15). Position 15 is an N6-succinyllysine; alternate (K15). The span at 42–83 shows a compositional bias: acidic residues; the sequence is ENGEQEADNEVDEEEEEGGEEEEEEEEGDGEEEDGDEDEEAE. Basic and acidic residues predominate over residues 100–110; it reads DTKKQKTDEDD. T101 bears the Phosphothreonine mark. K102 carries the post-translational modification N6-acetyllysine; alternate. K102 participates in a covalent cross-link: Glycyl lysine isopeptide (Lys-Gly) (interchain with G-Cter in SUMO2); alternate. The residue at position 106 (T106) is a Phosphothreonine.

The protein belongs to the pro/parathymosin family. As to quaternary structure, interacts with NUPR1; regulates apoptotic process. Post-translationally, covalently linked to a small RNA of about 20 nucleotides.

It localises to the nucleus. Its function is as follows. Prothymosin alpha may mediate immune function by conferring resistance to certain opportunistic infections. This is Prothymosin alpha (PTMA) from Pongo abelii (Sumatran orangutan).